The following is a 127-amino-acid chain: Aspartate 1-decarboxylase (127 aa).

The active-site Schiff-base intermediate with substrate; via pyruvic acid is the Ser-25. Ser-25 carries the pyruvic acid (Ser) modification. Thr-57 contacts substrate. The active-site Proton donor is Tyr-58. A substrate-binding site is contributed by 73 to 75 (GAA).

Belongs to the PanD family. In terms of assembly, heterooctamer of four alpha and four beta subunits. Pyruvate is required as a cofactor. In terms of processing, is synthesized initially as an inactive proenzyme, which is activated by self-cleavage at a specific serine bond to produce a beta-subunit with a hydroxyl group at its C-terminus and an alpha-subunit with a pyruvoyl group at its N-terminus.

The protein resides in the cytoplasm. It catalyses the reaction L-aspartate + H(+) = beta-alanine + CO2. Its pathway is cofactor biosynthesis; (R)-pantothenate biosynthesis; beta-alanine from L-aspartate: step 1/1. Functionally, catalyzes the pyruvoyl-dependent decarboxylation of aspartate to produce beta-alanine. The sequence is that of Aspartate 1-decarboxylase from Bacillus cereus (strain G9842).